Consider the following 996-residue polypeptide: Protein psiR (996 aa).

The signal sequence occupies residues 1 to 21 (MKKIILMLLLFSIFFILKSES). N-linked (GlcNAc...) asparagine glycans are attached at residues asparagine 79, asparagine 117, asparagine 323, asparagine 396, asparagine 428, asparagine 474, asparagine 500, asparagine 645, and asparagine 779. Residues 105-250 (QSLSNPNIYS…YDECGVCEGD (146 aa)) form the PA14 domain.

This sequence belongs to the prespore-cell-inducing factor family.

The protein resides in the secreted. This chain is Protein psiR (psiR), found in Dictyostelium discoideum (Social amoeba).